We begin with the raw amino-acid sequence, 569 residues long: MKITSRELTDIFQKHVENLFPNKELKPVEITVATNENFGDYQCNFAMINSKIIGDNPRKIAEEVKNNFPYGDVIEKLEVAGPGFINIFLSDKYISNSIKKIGEDYDFSFLNRKGKVIIDFSSPNIAKRMHIGHLRSTIIGESISRIYRFLGYDVVADNHIGDWGTQFGKLIVGYRNWLDKKAYKKNAIEELERVYVKFSDEAEKDPSLEDLARAELKKVQDGEEENTKLWKEFITESLKEYNKLYKRLDVHFDTYYGESFYNDMMADVVKELVDKKIAVDDDGAKVVFFDEKDNLFPCIVQKKDGAYLYSTSDIATVKFRKNTYDVNRMIYLTDARQQDHFKQFFKITDMLGWNIEKYHIWFGIIRFADGILSTRKGNVIKLEELLDEAHSRAYDVVNEKNPNLSEGEKQNIAEVVGVSSVKYADLSQNKQSDIIFEWDKMLSFEGNTAPYLLYTYARIQSILRKVAELNIGLNENIEIKTENKIEKSLATYLLAFPISVLKAGETFKPNLIADYLYELSKKLNSFYNNCPILNQDIETLKSRALLIKKTGEVLKEGLELLGIPILNKM.

The 'HIGH' region motif lies at 123–133 (PNIAKRMHIGH).

The protein belongs to the class-I aminoacyl-tRNA synthetase family. As to quaternary structure, monomer.

Its subcellular location is the cytoplasm. It carries out the reaction tRNA(Arg) + L-arginine + ATP = L-arginyl-tRNA(Arg) + AMP + diphosphate. This chain is Arginine--tRNA ligase, found in Fusobacterium nucleatum subsp. nucleatum (strain ATCC 25586 / DSM 15643 / BCRC 10681 / CIP 101130 / JCM 8532 / KCTC 2640 / LMG 13131 / VPI 4355).